We begin with the raw amino-acid sequence, 230 residues long: DNA mismatch repair protein MutH (230 aa).

This sequence belongs to the MutH family.

The protein localises to the cytoplasm. Sequence-specific endonuclease that cleaves unmethylated GATC sequences. It is involved in DNA mismatch repair. The polypeptide is DNA mismatch repair protein MutH (Citrobacter koseri (strain ATCC BAA-895 / CDC 4225-83 / SGSC4696)).